The chain runs to 407 residues: 1-deoxy-D-xylulose 5-phosphate reductoisomerase (407 aa).

Positions 25, 26, 27, 28, 53, and 136 each coordinate NADPH. K137 serves as a coordination point for 1-deoxy-D-xylulose 5-phosphate. Residue E138 coordinates NADPH. Position 162 (D162) interacts with Mn(2+). 1-deoxy-D-xylulose 5-phosphate contacts are provided by S163, E164, S188, and H211. E164 contributes to the Mn(2+) binding site. G217 is a binding site for NADPH. Residues S224, N229, K230, and E233 each contribute to the 1-deoxy-D-xylulose 5-phosphate site. E233 is a binding site for Mn(2+).

It belongs to the DXR family. The cofactor is Mg(2+). Mn(2+) is required as a cofactor.

It carries out the reaction 2-C-methyl-D-erythritol 4-phosphate + NADP(+) = 1-deoxy-D-xylulose 5-phosphate + NADPH + H(+). It participates in isoprenoid biosynthesis; isopentenyl diphosphate biosynthesis via DXP pathway; isopentenyl diphosphate from 1-deoxy-D-xylulose 5-phosphate: step 1/6. Functionally, catalyzes the NADPH-dependent rearrangement and reduction of 1-deoxy-D-xylulose-5-phosphate (DXP) to 2-C-methyl-D-erythritol 4-phosphate (MEP). The sequence is that of 1-deoxy-D-xylulose 5-phosphate reductoisomerase from Rhodopseudomonas palustris (strain BisB5).